We begin with the raw amino-acid sequence, 203 residues long: Probable proteasome subunit beta type-4 (203 aa).

The protein belongs to the peptidase T1B family. In terms of assembly, the 26S proteasome consists of a 20S proteasome core and two 19S regulatory subunits. The 20S proteasome core is composed of 28 subunits that are arranged in four stacked rings, resulting in a barrel-shaped structure. The two end rings are each formed by seven alpha subunits, and the two central rings are each formed by seven beta subunits. The catalytic chamber with the active sites is on the inside of the barrel.

It is found in the cytoplasm. Its subcellular location is the nucleus. Non-catalytic component of the proteasome, a multicatalytic proteinase complex which is characterized by its ability to cleave peptides with Arg, Phe, Tyr, Leu, and Glu adjacent to the leaving group at neutral or slightly basic pH. The proteasome has an ATP-dependent proteolytic activity. The protein is Probable proteasome subunit beta type-4 (pcb-4) of Neurospora crassa (strain ATCC 24698 / 74-OR23-1A / CBS 708.71 / DSM 1257 / FGSC 987).